The sequence spans 883 residues: Putative GTP diphosphokinase RSH1, chloroplastic (883 aa).

A chloroplast-targeting transit peptide spans 1–55 (MTSASSMSVSVECVNICNLTKGDGNARSDCSALSCAWKAPRALTGFLASTAHPPV). One can recognise an HD domain in the interval 172–279 (FIIHPVAVAR…VKLADRLHNM (108 aa)). Residues 562 to 625 (LGSRVFVFTP…ENAEVVEIVT (64 aa)) form the TGS domain. Residues 710–726 (QSQDKSRDTTPAPQNGS) show a composition bias toward polar residues. Positions 710–746 (QSQDKSRDTTPAPQNGSVWAPKVNGKHNKAIKNSSSD) are disordered. One can recognise an ACT domain in the interval 796–867 (WLCVVSMDRK…LVLGVLGWSS (72 aa)).

Belongs to the RelA/SpoT family. Interacts with RPP5.

The protein localises to the plastid. Its subcellular location is the chloroplast. It carries out the reaction GTP + ATP = guanosine 3'-diphosphate 5'-triphosphate + AMP. In terms of biological role, may be involved in a rapid plant ppGpp (guanosine 3'-diphosphate 5'-diphosphate)-mediated response to pathogens and other stresses. This Arabidopsis thaliana (Mouse-ear cress) protein is Putative GTP diphosphokinase RSH1, chloroplastic (RSH1).